A 240-amino-acid polypeptide reads, in one-letter code: 4-hydroxy-tetrahydrodipicolinate reductase (240 aa).

Residues 79–81 (ATT) and 103–106 (SANM) contribute to the NAD(+) site. The active-site Proton donor/acceptor is His-135. A (S)-2,3,4,5-tetrahydrodipicolinate-binding site is contributed by His-136. The Proton donor role is filled by Lys-139. 145 to 146 (GT) is a binding site for (S)-2,3,4,5-tetrahydrodipicolinate.

This sequence belongs to the DapB family.

The protein resides in the cytoplasm. It carries out the reaction (S)-2,3,4,5-tetrahydrodipicolinate + NAD(+) + H2O = (2S,4S)-4-hydroxy-2,3,4,5-tetrahydrodipicolinate + NADH + H(+). The catalysed reaction is (S)-2,3,4,5-tetrahydrodipicolinate + NADP(+) + H2O = (2S,4S)-4-hydroxy-2,3,4,5-tetrahydrodipicolinate + NADPH + H(+). It functions in the pathway amino-acid biosynthesis; L-lysine biosynthesis via DAP pathway; (S)-tetrahydrodipicolinate from L-aspartate: step 4/4. In terms of biological role, catalyzes the conversion of 4-hydroxy-tetrahydrodipicolinate (HTPA) to tetrahydrodipicolinate. The chain is 4-hydroxy-tetrahydrodipicolinate reductase from Staphylococcus aureus (strain MSSA476).